The following is a 293-amino-acid chain: MFNFFKKIVNKIKGEEAKEKKRQSVPKEELEEILIGFDIQYDLIESLLKHLGDLITPKQLEVALLRFVRGDSYYDKTRLKTITTKPLVHLIVGVNGAGKTTTIAKLAKLSLKQHKKALLGAGDTFRAAAVKQLQLWGEKLNIQVISAKEGSDPSSLAYNTIESAIAKNIDEVFIDTAGRLHNQTNLKNELSKIARTCSKVLKDAPFYKFLILDGTQGSSGLTQAKIFHETLALDGVIMTKLDGTSKGGAILSVLYELKLPILYLGMGEKEDDLIAFDEERFIEDLVDAVFVGQ.

Residues glycine 93–threonine 100, aspartate 175–arginine 179, and threonine 239–aspartate 242 each bind GTP.

The protein belongs to the GTP-binding SRP family. FtsY subfamily. As to quaternary structure, part of the signal recognition particle protein translocation system, which is composed of SRP and FtsY. SRP is a ribonucleoprotein composed of Ffh and a 4.5S RNA molecule.

The protein resides in the cell inner membrane. The protein localises to the cytoplasm. It carries out the reaction GTP + H2O = GDP + phosphate + H(+). Involved in targeting and insertion of nascent membrane proteins into the cytoplasmic membrane. Acts as a receptor for the complex formed by the signal recognition particle (SRP) and the ribosome-nascent chain (RNC). Interaction with SRP-RNC leads to the transfer of the RNC complex to the Sec translocase for insertion into the membrane, the hydrolysis of GTP by both Ffh and FtsY, and the dissociation of the SRP-FtsY complex into the individual components. This Helicobacter pylori (strain ATCC 700392 / 26695) (Campylobacter pylori) protein is Signal recognition particle receptor FtsY.